The sequence spans 328 residues: Surface antigen CRP170 (328 aa).

Repeats lie at residues 38–102 and 103–167; these read NAPC…CKKC.

The polypeptide is Surface antigen CRP170 (Giardia intestinalis (Giardia lamblia)).